A 611-amino-acid chain; its full sequence is Aspartate--tRNA ligase, mitochondrial (611 aa).

The N-terminal 30 residues, 1-30 (MVLSRLPACLLPLVGTKVSIQGWLVATSRQ), are a transit peptide targeting the mitochondrion. L-aspartate is bound at residue Glu192. Residues 216-219 (QQYK) form an aspartate region. Arg238 is an L-aspartate binding site. ATP-binding positions include 238 to 240 (RDE) and Glu502. Arg509 contacts L-aspartate. 554-557 (GFDR) contributes to the ATP binding site.

This sequence belongs to the class-II aminoacyl-tRNA synthetase family. Type 1 subfamily.

It is found in the mitochondrion. It catalyses the reaction tRNA(Asp) + L-aspartate + ATP = L-aspartyl-tRNA(Asp) + AMP + diphosphate. This chain is Aspartate--tRNA ligase, mitochondrial (msd1), found in Schizosaccharomyces pombe (strain 972 / ATCC 24843) (Fission yeast).